The following is a 123-amino-acid chain: Large ribosomal subunit protein uL14 (123 aa).

It belongs to the universal ribosomal protein uL14 family. In terms of assembly, part of the 50S ribosomal subunit. Forms a cluster with proteins L3 and L19. In the 70S ribosome, L14 and L19 interact and together make contacts with the 16S rRNA in bridges B5 and B8.

Its function is as follows. Binds to 23S rRNA. Forms part of two intersubunit bridges in the 70S ribosome. The polypeptide is Large ribosomal subunit protein uL14 (Tropheryma whipplei (strain TW08/27) (Whipple's bacillus)).